Consider the following 97-residue polypeptide: Acylphosphatase (97 aa).

Positions Lys-3 to Tyr-97 constitute an Acylphosphatase-like domain. Catalysis depends on residues Arg-18 and Asn-36.

This sequence belongs to the acylphosphatase family.

It catalyses the reaction an acyl phosphate + H2O = a carboxylate + phosphate + H(+). The sequence is that of Acylphosphatase (acyP) from Lactococcus lactis subsp. lactis (strain IL1403) (Streptococcus lactis).